Here is a 432-residue protein sequence, read N- to C-terminus: FAD-dependent monooxygenase pynG (432 aa).

FAD is bound by residues E32, R103, D315, and A328.

It belongs to the paxM FAD-dependent monooxygenase family. The cofactor is FAD.

It functions in the pathway secondary metabolite biosynthesis. In terms of biological role, FAD-dependent monooxygenase; part of the gene cluster that mediates the biosynthesis of pyranonigrins, a family of antioxidative compounds. The first step of pyranonigrins biosynthesis is performed by the hybrid PKS-NRPS synthetase that condenses 6 malonyl-CoA units to an acetyl starter unit, to form a 1,3,5-trioxotetradecane-6,8-dienyl-ACP. The enoyl reductase (ER) domain of pynA is likely to be functional during the first two rounds of polyketide chain extension, to generate the saturated C-C bonds of the alkyl side chain. PynA subsequently forms the amide bond between the acyl chain and L-serine. Although pynA has a terminal reductase domain, it appears to require the thioesterase pynI for the release of the straight-chain intermediate from pynA via the formation of a tetramic acid pyranonigrin J. The methyltransferase pynC then coverts pyranonigrin J to pyranonigrin I via N-methylation. The FAD-dependent monooxygenase pynG catalyzes an epoxidation-mediated cyclization to form the dihydro-gamma-pyrone moiety, followed by pynD-catalyzed oxidation of the alcohol to the ketone and enolization to yield the characteristic tetramic acid-fused gamma-pyrone core of pyranonigrin H. Pyranonigrin H is substrate of pynH for dehydration-mediated exo-methylene formation from the serine side chain to produce pyranonigrin E, before the oxidase pynE reduces the exo-methylene of pyranonigrin E into a pendant methyl to form pyranonigrin G. The FAD-linked oxidoreductase pynB performs the reverse reaction and converts pyranonigrin G back to pyranonigrin E. The chain is FAD-dependent monooxygenase pynG from Aspergillus niger (strain ATCC MYA-4892 / CBS 513.88 / FGSC A1513).